We begin with the raw amino-acid sequence, 224 residues long: Giant hemoglobin linker AV-1 chain (224 aa).

An LDL-receptor class A domain is found at 62–103 (HWCPSKYHRCGNSPQCMSNMAFCDGVNDCKNHFDEDENRCVV). 3 disulfides stabilise this stretch: cysteine 64-cysteine 77, cysteine 71-cysteine 90, and cysteine 84-cysteine 101. Asparagine 108 is a glycosylation site (N-linked (GlcNAc...) asparagine).

As to quaternary structure, giant hemoglobin is composed of four heme-containing chains (AI to AIV), and two linker chains (AV and AVI).

In terms of biological role, acts as a linker for the assembly of heme-containing chains in the construction of giant hemoglobin. This chain is Giant hemoglobin linker AV-1 chain, found in Lamellibrachia sp. (Deep-sea giant tube worm).